The following is a 130-amino-acid chain: Glycine cleavage system H protein (130 aa).

Residues 25-106 (MALIGISDFA…PFDSWMIKVK (82 aa)) enclose the Lipoyl-binding domain. K66 carries the post-translational modification N6-lipoyllysine.

This sequence belongs to the GcvH family. As to quaternary structure, the glycine cleavage system is composed of four proteins: P, T, L and H. (R)-lipoate is required as a cofactor.

Its function is as follows. The glycine cleavage system catalyzes the degradation of glycine. The H protein shuttles the methylamine group of glycine from the P protein to the T protein. The chain is Glycine cleavage system H protein from Leptospira interrogans serogroup Icterohaemorrhagiae serovar copenhageni (strain Fiocruz L1-130).